The primary structure comprises 172 residues: Adenine phosphoribosyltransferase (172 aa).

The protein belongs to the purine/pyrimidine phosphoribosyltransferase family. In terms of assembly, homodimer.

Its subcellular location is the cytoplasm. The enzyme catalyses AMP + diphosphate = 5-phospho-alpha-D-ribose 1-diphosphate + adenine. The protein operates within purine metabolism; AMP biosynthesis via salvage pathway; AMP from adenine: step 1/1. Functionally, catalyzes a salvage reaction resulting in the formation of AMP, that is energically less costly than de novo synthesis. This is Adenine phosphoribosyltransferase from Streptococcus agalactiae serotype III (strain NEM316).